Reading from the N-terminus, the 115-residue chain is MNLFVALFINASLSFILISVAFWLPQLNIYTEKASPYECGFDPLSSARLPFSMKFFLVAITFLLFDLEIALLLPLPWAIQITKLSAMMITSFILISILALGLIYEWMNKGLEWTE.

The next 3 helical transmembrane spans lie at 3–23 (LFVALFINASLSFILISVAFW), 55–75 (FFLVAITFLLFDLEIALLLPL), and 84–104 (LSAMMITSFILISILALGLIY).

This sequence belongs to the complex I subunit 3 family. As to quaternary structure, core subunit of respiratory chain NADH dehydrogenase (Complex I) which is composed of 45 different subunits. Interacts with TMEM186. Interacts with TMEM242.

The protein localises to the mitochondrion inner membrane. It carries out the reaction a ubiquinone + NADH + 5 H(+)(in) = a ubiquinol + NAD(+) + 4 H(+)(out). Core subunit of the mitochondrial membrane respiratory chain NADH dehydrogenase (Complex I) which catalyzes electron transfer from NADH through the respiratory chain, using ubiquinone as an electron acceptor. Essential for the catalytic activity of complex I. This is NADH-ubiquinone oxidoreductase chain 3 from Sigmodon hispidus (Hispid cotton rat).